We begin with the raw amino-acid sequence, 302 residues long: MSIKILSESEIKQVANSYQAPAVLFANPKNLYQRRAKRLRDLAQNHPLSDYLLFAADIVESQLSTLEKNPLPPQQLEQLNAIEPLNAKTFKRDSIWREYLTEILDEIKPKANEQIAATIEFLEKTSSAELEEMANKLLAQEFNLVSSDKAVFIWAALSLYWLQAAQQIPHNSQVENAENLHHCPVCGSLPVASIVQIGTSQGLRYLHCNLCESEWNLVRAQCTNCNSHDKLEMWSLDEELALVRAETCGSCESYLKMMFQEKDPYVEPVADDLASIFLDIEMEEKGFARSGLNPFIFPAEEA.

The protein belongs to the FdhE family.

Its subcellular location is the cytoplasm. Its function is as follows. Necessary for formate dehydrogenase activity. In Haemophilus influenzae (strain PittEE), this protein is Protein FdhE homolog.